A 345-amino-acid polypeptide reads, in one-letter code: S-adenosylmethionine:tRNA ribosyltransferase-isomerase (345 aa).

The protein belongs to the QueA family. Monomer.

It is found in the cytoplasm. It catalyses the reaction 7-aminomethyl-7-carbaguanosine(34) in tRNA + S-adenosyl-L-methionine = epoxyqueuosine(34) in tRNA + adenine + L-methionine + 2 H(+). The protein operates within tRNA modification; tRNA-queuosine biosynthesis. Its function is as follows. Transfers and isomerizes the ribose moiety from AdoMet to the 7-aminomethyl group of 7-deazaguanine (preQ1-tRNA) to give epoxyqueuosine (oQ-tRNA). This is S-adenosylmethionine:tRNA ribosyltransferase-isomerase from Acinetobacter baumannii (strain ATCC 17978 / DSM 105126 / CIP 53.77 / LMG 1025 / NCDC KC755 / 5377).